A 312-amino-acid chain; its full sequence is Glycerol 2-dehydrogenase (NADP(+)) (312 aa).

Catalysis depends on tyrosine 56, which acts as the Proton donor. Histidine 112 contacts substrate. 220–274 serves as a coordination point for NADP(+); that stretch reads SPLGSTDAPLLKEPVILEIAKKNNVQPGHVVISWHVQRGYVVLPKSVNPDRIKTN. Serine 306 carries the post-translational modification Phosphoserine.

The protein belongs to the aldo/keto reductase family.

The protein resides in the cytoplasm. It carries out the reaction glycerol + NADP(+) = dihydroxyacetone + NADPH + H(+). Functionally, glycerol dehydrogenase involved in glycerol catabolism under microaerobic conditions. Has mRNA binding activity. The sequence is that of Glycerol 2-dehydrogenase (NADP(+)) (GCY1) from Saccharomyces cerevisiae (strain ATCC 204508 / S288c) (Baker's yeast).